The following is a 339-amino-acid chain: DNA-directed RNA polymerase subunit alpha (339 aa).

Residues 1 to 233 (MVREEVAGST…DLFLPFLHAE (233 aa)) form an alpha N-terminal domain (alpha-NTD) region. An alpha C-terminal domain (alpha-CTD) region spans residues 264–339 (KKGIPLNCIF…IDLLKNKLSF (76 aa)).

This sequence belongs to the RNA polymerase alpha chain family. In terms of assembly, in plastids the minimal PEP RNA polymerase catalytic core is composed of four subunits: alpha, beta, beta', and beta''. When a (nuclear-encoded) sigma factor is associated with the core the holoenzyme is formed, which can initiate transcription.

It localises to the plastid. The protein localises to the chloroplast. It carries out the reaction RNA(n) + a ribonucleoside 5'-triphosphate = RNA(n+1) + diphosphate. Its function is as follows. DNA-dependent RNA polymerase catalyzes the transcription of DNA into RNA using the four ribonucleoside triphosphates as substrates. The protein is DNA-directed RNA polymerase subunit alpha of Elymus hystrix (Eastern bottlebrush grass).